Reading from the N-terminus, the 534-residue chain is Zinc finger protein 703-A (534 aa).

3 disordered regions span residues 1–35, 90–251, and 300–320; these read MNCS…THPV, SQIG…VAPV, and QLPG…LTGA. Low complexity-rich tracts occupy residues 15 to 34, 115 to 124, and 146 to 155; these read QSSS…PTHP, RSSSLKLGES, and GSSAGGSADK. Polar residues predominate over residues 173-182; the sequence is SPSSRVSSPG. Basic and acidic residues predominate over residues 185–200; it reads CDSKNNESQEKKEPEA. A compositionally biased stretch (polar residues) spans 204–217; the sequence is SLETSQANPTLTRA. The span at 218-229 shows a compositional bias: low complexity; sequence SISNSSAESSQS. The segment covering 230–239 has biased composition (polar residues); it reads GDVTPSSKSD. The segment at 406–434 adopts a C2H2-type zinc-finger fold; the sequence is HICNWVSASGPCDKRFATSEELLAHLRTH.

It belongs to the Elbow/Noc family.

It localises to the nucleus. It is found in the cytoplasm. Its function is as follows. Transcriptional corepressor which does not bind directly to DNA and may regulate transcription through recruitment of histone deacetylases to gene promoters. Regulates cell adhesion, migration and proliferation. Involved in specification of the lateral neural plate border (NPB). May be required for segmental gene expression during hindbrain development. This Xenopus laevis (African clawed frog) protein is Zinc finger protein 703-A (znf703-a).